Consider the following 243-residue polypeptide: Small ribosomal subunit protein uS3 (243 aa).

Positions 39–110 constitute a KH type-2 domain; the sequence is IRGFIQKKYA…QVRINVVEIE (72 aa). A disordered region spans residues 215-243; sequence DQPLPVGASPRRKGSRRPQQFEDRSNDGK. Residues 233–243 are compositionally biased toward basic and acidic residues; it reads QQFEDRSNDGK.

Belongs to the universal ribosomal protein uS3 family. As to quaternary structure, part of the 30S ribosomal subunit. Forms a tight complex with proteins S10 and S14.

In terms of biological role, binds the lower part of the 30S subunit head. Binds mRNA in the 70S ribosome, positioning it for translation. This is Small ribosomal subunit protein uS3 from Prochlorococcus marinus (strain MIT 9211).